The following is a 119-amino-acid chain: Holo-[acyl-carrier-protein] synthase (119 aa).

Residues Asp8 and Glu58 each coordinate Mg(2+).

The protein belongs to the P-Pant transferase superfamily. AcpS family. It depends on Mg(2+) as a cofactor.

The protein localises to the cytoplasm. The enzyme catalyses apo-[ACP] + CoA = holo-[ACP] + adenosine 3',5'-bisphosphate + H(+). Functionally, transfers the 4'-phosphopantetheine moiety from coenzyme A to a Ser of acyl-carrier-protein. This is Holo-[acyl-carrier-protein] synthase from Bacillus cereus (strain ATCC 14579 / DSM 31 / CCUG 7414 / JCM 2152 / NBRC 15305 / NCIMB 9373 / NCTC 2599 / NRRL B-3711).